The sequence spans 208 residues: Non-specific lipid transfer protein GPI-anchored 4 (208 aa).

An N-terminal signal peptide occupies residues 1-25; sequence MKQSLLLSFVLLLLSSSSLVTPIHA. Residues Asn27, Asn67, and Asn105 are each glycosylated (N-linked (GlcNAc...) asparagine). Disulfide bonds link Cys48–Cys91, Cys58–Cys75, Cys76–Cys116, and Cys89–Cys125. Residues 136–181 form a disordered region; sequence GASPVSPSAGAPTTSPSAAKSPETSATSPSSDETPSMTAPSPSSSG. A lipid anchor (GPI-anchor amidated serine) is attached at Ser179. Positions 180-208 are cleaved as a propeptide — removed in mature form; the sequence is SGTNILSVPALTIVFVIVSSVAYISAFSN.

It belongs to the plant LTP family. As to expression, confined to the anthers and stamen of the inflorescence, especially in pollen.

The protein localises to the cell membrane. Functionally, lipid transfer protein involved in seed and ovule maturation and development, probably by regulating the fatty acids homeostasis during suberin and sporopollenin biosynthesis or deposition. The chain is Non-specific lipid transfer protein GPI-anchored 4 from Arabidopsis thaliana (Mouse-ear cress).